Reading from the N-terminus, the 268-residue chain is Putative pyruvate, phosphate dikinase regulatory protein (268 aa).

147-154 (GLSRTSKT) serves as a coordination point for ADP.

Belongs to the pyruvate, phosphate/water dikinase regulatory protein family. PDRP subfamily.

The catalysed reaction is N(tele)-phospho-L-histidyl/L-threonyl-[pyruvate, phosphate dikinase] + ADP = N(tele)-phospho-L-histidyl/O-phospho-L-threonyl-[pyruvate, phosphate dikinase] + AMP + H(+). It catalyses the reaction N(tele)-phospho-L-histidyl/O-phospho-L-threonyl-[pyruvate, phosphate dikinase] + phosphate + H(+) = N(tele)-phospho-L-histidyl/L-threonyl-[pyruvate, phosphate dikinase] + diphosphate. Its function is as follows. Bifunctional serine/threonine kinase and phosphorylase involved in the regulation of the pyruvate, phosphate dikinase (PPDK) by catalyzing its phosphorylation/dephosphorylation. The chain is Putative pyruvate, phosphate dikinase regulatory protein from Clostridium beijerinckii (strain ATCC 51743 / NCIMB 8052) (Clostridium acetobutylicum).